A 383-amino-acid chain; its full sequence is Fatty acid hydroxylase ahd1 (383 aa).

4 helical membrane-spanning segments follow: residues 84–104 (VMGL…NKSW), 123–143 (TVHT…LFAL), 172–192 (LIPV…IIYY), and 214–236 (VAQW…RALH). Residues 217-341 (WLVCLLMEDI…VGLLDAIFKT (125 aa)) enclose the Fatty acid hydroxylase domain. The N-linked (GlcNAc...) asparagine glycan is linked to N342.

Belongs to the sterol desaturase family.

It is found in the membrane. It functions in the pathway secondary metabolite biosynthesis. Its function is as follows. Fatty acid hydroxylase; part of the gene cluster that mediates the biosynthesis of the glycolipid biosurfactant ustilagic acid (UA). UA is a secreted cellobiose glycolipid that is toxic for many microorganisms and confers biocontrol activity to U.maydis. UA consists of 15,16-dihydroxypalmitic or 2,15,16-trihydroxypalmitic acid, which is O-glycosidically linked to cellobiose at its terminal hydroxyl group. In addition, the cellobiose moiety is acetylated and acylated with a short-chain hydroxy fatty acid. UA biosynthesis starts with omega-hydroxylation of palmitic acid catalyzed by the cytochrome P450 monooxygenase cyp1. Terminal hydroxylation of palmitic acid precedes subterminal hydroxylation catalyzed by the cytochrome P450 monooxygenase cyp2. Sequential glucosylation of the hydroxy fatty acid is probably catalyzed by the glycosyltransferase ugt1. The cellobiose lipid is further decorated by acetylation of the proximal glucose residue and by acylation with a short-chain beta-hydroxy fatty acid at the distal glucose residue. The acyltransferase uat1 may be a good candidate for catalyzing either acetylation or acylation of the cellobiose lipid. The fatty acid synthase fas2 may be involved in synthesis of the carbon backbone of the short-chain beta-hydroxy fatty acid esterified to the cellobiose disaccharide. The secreted UA consists of a mixture of both alpha-hydroxylated and non-hydroxylated glycolipids; therefore, alpha-hydroxylation of the long-chain fatty, catalyzed by the fatty acid hydroxylase ahd1, occurs late in UA biosynthesis and may be the last step before secretion. The chain is Fatty acid hydroxylase ahd1 from Mycosarcoma maydis (Corn smut fungus).